A 101-amino-acid chain; its full sequence is Protein RnfH (101 aa).

It belongs to the UPF0125 (RnfH) family.

The protein is Protein RnfH of Pseudomonas aeruginosa (strain UCBPP-PA14).